Here is a 196-residue protein sequence, read N- to C-terminus: Early light-induced protein, chloroplastic (196 aa).

The N-terminal 48 residues, 1–48 (MAVSSCQSIMSNSMTNISSRSRVNQFTNIPSVYIPTLRRNVSLKVRSM), are a transit peptide targeting the chloroplast. Basic and acidic residues predominate over residues 47–57 (SMAEGEPKEQS). The disordered stretch occupies residues 47 to 81 (SMAEGEPKEQSKVAVDPTTPTASTPTPQPAYTRPP). Transmembrane regions (helical) follow at residues 105–125 (LAMI…QGLS), 132–152 (GVAW…IPFF), and 176–196 (IAML…TSLV).

It belongs to the ELIP/psbS family.

It is found in the plastid. Its subcellular location is the chloroplast membrane. In terms of biological role, probably involved in the integration of pigments into the mature pigment-protein complexes. The protein is Early light-induced protein, chloroplastic of Pisum sativum (Garden pea).